The following is a 41-amino-acid chain: Photosystem I reaction center subunit IX (41 aa).

The chain crosses the membrane as a helical span at residues 7-27 (YLSTAPVVAFAWITITAGLLI).

Belongs to the PsaJ family.

The protein resides in the plastid. The protein localises to the chloroplast thylakoid membrane. Its function is as follows. May help in the organization of the PsaE and PsaF subunits. The sequence is that of Photosystem I reaction center subunit IX from Oedogonium cardiacum (Filamentous green alga).